A 257-amino-acid chain; its full sequence is UPF0246 protein CLH_2088 (257 aa).

The protein belongs to the UPF0246 family.

This chain is UPF0246 protein CLH_2088, found in Clostridium botulinum (strain Alaska E43 / Type E3).